A 407-amino-acid polypeptide reads, in one-letter code: DNA primase DnaG (407 aa).

The region spanning 172–248 (DWIIVVEGRA…HIDYVARAPP (77 aa)) is the Toprim domain. Mg(2+) contacts are provided by Glu178, Asp222, and Asp224. The disordered stretch occupies residues 279 to 304 (AGAEKTEAAAPPPQQPTAPPAAPSQQ). Positions 288 to 300 (APPPQQPTAPPAA) are enriched in pro residues.

Belongs to the archaeal DnaG primase family. As to quaternary structure, forms a ternary complex with MCM helicase and DNA. Component of the archaeal exosome complex. Mg(2+) serves as cofactor.

It catalyses the reaction ssDNA + n NTP = ssDNA/pppN(pN)n-1 hybrid + (n-1) diphosphate.. Functionally, RNA polymerase that catalyzes the synthesis of short RNA molecules used as primers for DNA polymerase during DNA replication. Also part of the exosome, which is a complex involved in RNA degradation. Acts as a poly(A)-binding protein that enhances the interaction between heteromeric, adenine-rich transcripts and the exosome. The chain is DNA primase DnaG from Pyrobaculum calidifontis (strain DSM 21063 / JCM 11548 / VA1).